The chain runs to 699 residues: Mannan-binding lectin serine protease 1 (699 aa).

An N-terminal signal peptide occupies residues 1 to 19; the sequence is MRWLLLYYALCFSLSKASA. The 119-residue stretch at 20 to 138 folds into the CUB 1 domain; the sequence is HTVELNNMFG…TGFDAHYMAV (119 aa). The homodimerization stretch occupies residues 20–184; the sequence is HTVELNNMFG…HTDNRTCRVE (165 aa). The interval 20 to 184 is interaction with MBL2; that stretch reads HTVELNNMFG…HTDNRTCRVE (165 aa). The interaction with FCN2 stretch occupies residues 20–278; sequence HTVELNNMFG…STQSHSVLIL (259 aa). Asn49 carries N-linked (GlcNAc...) asparagine glycosylation. Positions 68, 76, 121, 123, 139, 140, and 142 each coordinate Ca(2+). Cys73 and Cys91 form a disulfide bridge. Residues 139 to 182 form the EGF-like; calcium-binding domain; it reads DVDECKEREDEELSCDHYCHNYIGGYYCSCRFGYILHTDNRTCR. 4 disulfide bridges follow: Cys143-Cys157, Cys153-Cys166, Cys168-Cys181, and Cys185-Cys212. The Ca(2+) site is built by Asn159, Tyr160, and Gly163. (3R)-3-hydroxyasparagine is present on Asn159. The N-linked (GlcNAc...) (complex) asparagine glycan is linked to Asn178. The 113-residue stretch at 185 to 297 folds into the CUB 2 domain; sequence CSDNLFTQRT…RGWRLSYRAA (113 aa). Positions 235, 245, 282, and 284 each coordinate Ca(2+). Cys242 and Cys260 are disulfide-bonded. 2 Sushi domains span residues 299–364 and 365–434; these read NECP…TCKI and VDCR…TCLP. Cystine bridges form between Cys301–Cys349, Cys329–Cys362, Cys367–Cys414, Cys397–Cys432, Cys436–Cys572, and Cys475–Cys491. A glycan (N-linked (GlcNAc...) (complex) asparagine) is linked at Asn385. N-linked (GlcNAc...) asparagine glycosylation is present at Asn407. The Peptidase S1 domain maps to 449–696; sequence IFNGRPAQKG…NKDWIQRVTG (248 aa). His490 functions as the Charge relay system in the catalytic mechanism. The N-linked (GlcNAc) asparagine glycan is linked to Leu533. Asp552 (charge relay system) is an active-site residue. The N-linked (GlcNAc) asparagine glycan is linked to Glu599. Disulfide bonds link Cys614–Cys631 and Cys642–Cys672. The active-site Charge relay system is Ser646.

Belongs to the peptidase S1 family. Homodimer. Interacts with the oligomeric lectins MBL2, FCN2 and FCN3; triggers the lectin pathway of complement through activation of C3. Interacts with SERPING1. Interacts with COLEC11; probably triggers the lectin pathway of complement. Post-translationally, the iron and 2-oxoglutarate dependent 3-hydroxylation of aspartate and asparagine is (R) stereospecific within EGF domains. In terms of processing, N-glycosylated. Some N-linked glycan are of the complex-type. Autoproteolytic processing of the proenzyme produces the active enzyme composed on the heavy and the light chain held together by a disulfide bond. Isoform 1 but not isoform 2 is activated through autoproteolytic processing. In terms of tissue distribution, protein of the plasma which is primarily expressed by liver.

Its subcellular location is the secreted. With respect to regulation, inhibited by SERPING1 and A2M. In terms of biological role, functions in the lectin pathway of complement, which performs a key role in innate immunity by recognizing pathogens through patterns of sugar moieties and neutralizing them. The lectin pathway is triggered upon binding of mannan-binding lectin (MBL) and ficolins to sugar moieties which leads to activation of the associated proteases MASP1 and MASP2. Functions as an endopeptidase and may activate MASP2 or C2 or directly activate C3 the key component of complement reaction. Isoform 2 may have an inhibitory effect on the activation of the lectin pathway of complement or may cleave IGFBP5. Also plays a role in development. The protein is Mannan-binding lectin serine protease 1 (MASP1) of Homo sapiens (Human).